Consider the following 517-residue polypeptide: Glucans biosynthesis protein G (517 aa).

Residues 1-28 (MKHKLQMMKMRWLSAAVMLTLYTSSSWA) form the signal peptide.

It belongs to the OpgD/OpgG family.

The protein localises to the periplasm. Its pathway is glycan metabolism; osmoregulated periplasmic glucan (OPG) biosynthesis. Functionally, involved in the biosynthesis of osmoregulated periplasmic glucans (OPGs). In Escherichia coli O1:K1 / APEC, this protein is Glucans biosynthesis protein G.